The primary structure comprises 358 residues: Thiol protease aleurain-like (358 aa).

A signal peptide spans 1–21 (MSVKLNLSSSILLILFAAAAS). A propeptide spans 22 to 140 (KEIGFDESNP…KGSHKITEAT (119 aa)) (activation peptide). N-linked (GlcNAc...) asparagine glycosylation occurs at asparagine 125. 2 cysteine pairs are disulfide-bonded: cysteine 162/cysteine 205 and cysteine 196/cysteine 238. The active site involves cysteine 165. Residue asparagine 254 is glycosylated (N-linked (GlcNAc...) asparagine). A disulfide bond links cysteine 296 and cysteine 346. Catalysis depends on residues histidine 305 and asparagine 325.

The protein belongs to the peptidase C1 family.

It is found in the vacuole. It catalyses the reaction Hydrolysis of proteins, acting as an aminopeptidase (notably, cleaving Arg-|-Xaa bonds) as well as an endopeptidase.. Functionally, may play a role in proteolysis leading to mobilization of nitrogen during senescence and starvation. The sequence is that of Thiol protease aleurain-like from Arabidopsis thaliana (Mouse-ear cress).